Here is a 332-residue protein sequence, read N- to C-terminus: UPF0194 membrane protein YbhG (332 aa).

The N-terminal stretch at 1–16 (MMKKPVVIGLAVVVLA) is a signal peptide. Positions 108–211 (EEIAQAAAAV…LQDSTLVAPS (104 aa)) form a coiled coil.

The protein belongs to the UPF0194 family.

It localises to the periplasm. In Escherichia coli O6:H1 (strain CFT073 / ATCC 700928 / UPEC), this protein is UPF0194 membrane protein YbhG.